The chain runs to 533 residues: Probable anion transporter 4, chloroplastic (533 aa).

A run of 12 helical transmembrane segments spans residues 117–137 (MLAL…VAIV), 152–172 (IVQS…GTLV), 179–199 (VVMA…PWAA), 203–223 (LWAL…ALPC), 243–263 (IAMA…PILM), 267–287 (GIYG…LVWL), 342–362 (VIVA…WMPI), 376–396 (AWFS…AGFW), 417–437 (IGFI…QPLV), 438–458 (ASAW…GFLI), 474–494 (MCLT…GFFV), and 502–522 (GFIL…NIYA).

Belongs to the major facilitator superfamily. Sodium/anion cotransporter (TC 2.A.1.14) family. As to expression, expressed in leaf veins and root tips.

Its subcellular location is the plastid. It is found in the chloroplast membrane. Inorganic phosphate and probable anion transporter. This is Probable anion transporter 4, chloroplastic (ANTR4) from Arabidopsis thaliana (Mouse-ear cress).